Consider the following 193-residue polypeptide: MARARQEGSSPEPVEGLARDSPRPFPLGRLMPSAVSCSLCEPGLPAAPAAPALLPAAYLCAPTAPPAVTAALGGPRWPGGHRSRPRGPRPDGPQPSLSPAQQHLESPVPSAPEALAGGPTQAAPGVRVEEEEWAREIGAQLRRMADDLNAQYERRRQEEQHRHRPSPWRVMYNLFMGLLPLPRDPGAPEMEPN.

2 disordered regions span residues 1-31 (MARARQEGSSPEPVEGLARDSPRPFPLGRLM) and 71-131 (ALGG…VEEE). Serine 10 is modified (phosphoserine). Residues 137-151 (IGAQLRRMADDLNAQ) carry the BH3 motif.

It belongs to the Bcl-2 family. Interacts with MCL1 and BCL2A1. Interacts with BCL2 and BCL2L1/BCL-XL. Interacts (via BH3 domain) with NOL3 (via CARD domain); this interaction prevents BBC3 association with BCL2 and results in CASP8 activation.

It localises to the mitochondrion. Functionally, essential mediator of p53/TP53-dependent and p53/TP53-independent apoptosis. Promotes partial unfolding of BCL2L1 and dissociation of BCL2L1 from p53/TP53, releasing the bound p53/TP53 to induce apoptosis. Regulates ER stress-induced neuronal apoptosis. This is Bcl-2-binding component 3 (Bbc3) from Mus musculus (Mouse).